A 590-amino-acid chain; its full sequence is Beta-(1--&gt;2)glucan export ATP-binding/permease protein NdvA (590 aa).

The region spanning 21–301 is the ABC transmembrane type-1 domain; it reads VALICGANVA…MSAFANQISE (281 aa). The next 6 membrane-spanning stretches (helical) occupy residues 22–42, 55–75, 136–156, 158–178, 248–268, and 275–295; these read ALICGANVALAAIAILEPIMF, VFSTLAVWAGLGAFNVIAFVL, QHLSTAVALVLLVPTALSMDV, MSMVLLGLGVLYVGIGRLVMK, LSSTISMMVVLLIGAYLVTHG, and VIAFTGFATLLISRLDQMSAF. An ABC transporter domain is found at 335–569; that stretch reads VRFEDVGFEF…NGRFASLLRA (235 aa). 368–375 contacts ATP; it reads GPTGAGKT.

It belongs to the ABC transporter superfamily. Beta-(1--&gt;2)glucan exporter (TC 3.A.1.108.1) family. As to quaternary structure, homodimer.

It localises to the cell inner membrane. It carries out the reaction [(1-&gt;2)-beta-D-glucosyl](n)(in) + ATP + H2O = [(1-&gt;2)-beta-D-glucosyl](n)(out) + ADP + phosphate + H(+). Involved in beta-(1--&gt;2)glucan export. Transmembrane domains (TMD) form a pore in the inner membrane and the ATP-binding domain (NBD) is responsible for energy generation. This chain is Beta-(1--&gt;2)glucan export ATP-binding/permease protein NdvA, found in Mesorhizobium japonicum (strain LMG 29417 / CECT 9101 / MAFF 303099) (Mesorhizobium loti (strain MAFF 303099)).